We begin with the raw amino-acid sequence, 151 residues long: MRSLIQRVKYASVSVDGQEVGAIEQGVLAYIGLGHDDNLQSAQRMIDKILTYRIFDNDDDPAKYGKVDKNVQQVGGGLLLVSQFTLMAKTDKGRRPEFGSAMAPDMAQALFAQLVDYAKTQYLTVATGQFGADMQVLSVNDGPLNFLLEVH.

The short motif at Gly142 to Pro143 is the Gly-cisPro motif, important for rejection of L-amino acids element.

This sequence belongs to the DTD family. In terms of assembly, homodimer.

Its subcellular location is the cytoplasm. The enzyme catalyses glycyl-tRNA(Ala) + H2O = tRNA(Ala) + glycine + H(+). It carries out the reaction a D-aminoacyl-tRNA + H2O = a tRNA + a D-alpha-amino acid + H(+). Functionally, an aminoacyl-tRNA editing enzyme that deacylates mischarged D-aminoacyl-tRNAs. Also deacylates mischarged glycyl-tRNA(Ala), protecting cells against glycine mischarging by AlaRS. Acts via tRNA-based rather than protein-based catalysis; rejects L-amino acids rather than detecting D-amino acids in the active site. By recycling D-aminoacyl-tRNA to D-amino acids and free tRNA molecules, this enzyme counteracts the toxicity associated with the formation of D-aminoacyl-tRNA entities in vivo and helps enforce protein L-homochirality. This is D-aminoacyl-tRNA deacylase from Psychrobacter cryohalolentis (strain ATCC BAA-1226 / DSM 17306 / VKM B-2378 / K5).